The following is a 370-amino-acid chain: Probable neutral protease 2 homolog TRV_02539 (370 aa).

Positions 1-19 (MQLVAALAALGALVAPAVA) are cleaved as a signal peptide. Residues 20–188 (YPHAPMNETL…SIHSRALQKR (169 aa)) constitute a propeptide that is removed on maturation. Cystine bridges form between Cys-196–Cys-267 and Cys-274–Cys-292. Zn(2+) is bound at residue His-316. Glu-317 is an active-site residue. Zn(2+) is bound by residues His-320 and Asp-331.

The protein belongs to the peptidase M35 family. Requires Zn(2+) as cofactor.

The protein localises to the secreted. It catalyses the reaction Preferential cleavage of bonds with hydrophobic residues in P1'. Also 3-Asn-|-Gln-4 and 8-Gly-|-Ser-9 bonds in insulin B chain.. Probable secreted metalloprotease that shows high activities on basic nuclear substrates such as histone and protamine. May be involved in virulence. This Trichophyton verrucosum (strain HKI 0517) protein is Probable neutral protease 2 homolog TRV_02539.